We begin with the raw amino-acid sequence, 657 residues long: Transcription factor 12 (657 aa).

Residues 1-20 (MDEKGGTTSWGTSGQPSPSY) show a composition bias toward polar residues. 5 disordered regions span residues 1–76 (MDEK…SGLS), 89–285 (LGSP…QTGD), 297–340 (PDHT…YENS), 459–555 (VSAQ…ERRM), and 628–657 (KVSA…MGHM). Basic and acidic residues predominate over residues 30–43 (HYSDHLNDSRKGTH). 2 stretches are compositionally biased toward polar residues: residues 49-70 (TPFS…SLYS) and 93-112 (AQLS…SATS). The tract at residues 68–89 (LYSRDSGLSGCQSSLLRQELGL) is leucine-zipper. A Nuclear localization signal motif is present at residues 130-136 (KKVRKVP). Polar residues-rich tracts occupy residues 168 to 193 (MFAS…NGMS), 202 to 216 (GTST…SYGS), and 230 to 254 (VSPT…SSSP). The segment covering 300–311 (TSSSFPSNPSTP) has biased composition (low complexity). A compositionally biased stretch (polar residues) spans 312–340 (VGSPSPLTGASQWSRSGGQAPSSPNYENS). 3 stretches are compositionally biased toward basic and acidic residues: residues 493–505 (IKSE…ENIH), 511–526 (DDMK…DIKV), and 543–555 (PEQK…ERRM). One can recognise a bHLH domain in the interval 552–605 (ERRMANNARERLRVRDINEAFKELGRMCQLHLKSEKPQTKLLILHQAVAVILSL). Residues 607-630 (QQVRERNLNPKAACLKRREEEKVS) are class A specific domain. Polar residues predominate over residues 648 to 657 (SETTNPMGHM).

Efficient DNA binding requires dimerization with another bHLH protein. Forms homo- or heterooligomers with myogenin, E12 and ITF2 proteins.

It localises to the nucleus. In terms of biological role, transcriptional regulator. Involved in the initiation of neuronal differentiation. Activates transcription by binding to the E box-containing promoter. The chain is Transcription factor 12 (TCF12) from Gallus gallus (Chicken).